Here is a 946-residue protein sequence, read N- to C-terminus: MQNNRSLSKSSFFVGALILGKTTILLNATPLSDYFDNQANQLTTLFPLIDTLTNMTPYSHRATLFGVRDDTNQDIVLDHQNSIESWFENFSQDGGALSCKSLAITNTKNQILFLNSFAIKRAGAMYVNGNFDLSENHGSIIFSGNLSFPNASNFADTCTGGAVLCSKNVTISKNQGTAYFINNKAKSSGGAIQAAIINIKDNTGPCLFFNNAAGGTAGGALFANACRIENNSQPIYFLNNQSGLGGAIRVHQECILTKNTGSVIFNNNFAMEADISANHSSGGAIYCISCSIKDNPGIAAFDNNTAARDGGAICTQSLTIQDSGPVYFTNNQGTWGGAIMLRQDGACTLFADQGDIIFYNNRHFKDTFSNHVSVNCTRNVSLTVGASQGHSATFYDPILQRYTIQNSIQKFNPNPEHLGTILFSSAYIPDTSTSRDDFISHFRNHIGLYNGTLALEDRAEWKVYKFDQFGGTLRLGSRAVFSTTDEEQSSSSVGSVININNLAINLPSILGNRVAPKLWIRPTGSSAPYSEDNNPIINLSGPLSLLDDENLDPYDTADLAQPIAEVPLLYLLDVTAKHINTDNFYPEGLNTTQHYGYQGVWSPYWIETITTSDTSSEDTVNTLHRQLYGDWTPTGYKVNPENKGDIALSAFWQSFHNLFATLRYQTQQGQIAPTASGEATRLFVHQNSNNDAKGFHMEATGYSLGTTSNTASNHSFGVNFSQLFSNLYESHSDNSVASHTTTVALQINNPWLQERFSTSASLAYSYSNHHIKASGYSGKIQTEGKCYSTTLGAALSCSLSLQWRSRPLHFTPFIQAIAVRSNQTAFQESGDKARKFSVHKPLYNLTVPLGIQSAWESKFRLPTYWNIELAYQPVLYQQNPEVNVSLESSGSSWLLSGTTLARNAIAFKGRNQIFIFPKLSVFLDYQGSVSSSTTTHYLHAGTTFKF.

The signal sequence occupies residues 1–16 (MQNNRSLSKSSFFVGA). Residues 668–946 (QGQIAPTASG…YLHAGTTFKF (279 aa)) enclose the Autotransporter domain.

The protein belongs to the PMP outer membrane protein family.

Its subcellular location is the secreted. It localises to the cell wall. The protein localises to the cell outer membrane. The polypeptide is Probable outer membrane protein pmp18 (pmp18) (Chlamydia pneumoniae (Chlamydophila pneumoniae)).